The following is a 158-amino-acid chain: SsrA-binding protein (158 aa).

The protein belongs to the SmpB family.

The protein resides in the cytoplasm. Its function is as follows. Required for rescue of stalled ribosomes mediated by trans-translation. Binds to transfer-messenger RNA (tmRNA), required for stable association of tmRNA with ribosomes. tmRNA and SmpB together mimic tRNA shape, replacing the anticodon stem-loop with SmpB. tmRNA is encoded by the ssrA gene; the 2 termini fold to resemble tRNA(Ala) and it encodes a 'tag peptide', a short internal open reading frame. During trans-translation Ala-aminoacylated tmRNA acts like a tRNA, entering the A-site of stalled ribosomes, displacing the stalled mRNA. The ribosome then switches to translate the ORF on the tmRNA; the nascent peptide is terminated with the 'tag peptide' encoded by the tmRNA and targeted for degradation. The ribosome is freed to recommence translation, which seems to be the essential function of trans-translation. This is SsrA-binding protein from Glaesserella parasuis serovar 5 (strain SH0165) (Haemophilus parasuis).